We begin with the raw amino-acid sequence, 122 residues long: uncharacterized protein (122 aa).

This is an uncharacterized protein from Rickettsia conorii (strain ATCC VR-613 / Malish 7).